A 447-amino-acid chain; its full sequence is UDP-glucosyl transferase 79T1 (447 aa).

The Proton acceptor role is filled by His-18. Asp-116 functions as the Charge relay in the catalytic mechanism. UDP contacts are provided by Ser-265, Trp-323, Val-324, His-341, Thr-346, and Glu-349.

The protein belongs to the UDP-glycosyltransferase family. As to expression, mainly expressed in flowers, flower buds and young leaves, and, to a lesser extent, in old leaves, stems and roots.

It functions in the pathway secondary metabolite biosynthesis; terpenoid biosynthesis. Its function is as follows. Component of the oleanane-type triterpene saponins (e.g. saponarioside A and saponarioside B) biosynthetic pathway, leading to the production of natural products with detergent properties used as traditional sources of soap. A glycosyltransferase that mediates the conversion of QA-triF to QA-triFR via the elongation of the C-28 sugar chain with a deoxyhexose on the D-fucose moiety. The polypeptide is UDP-glucosyl transferase 79T1 (Saponaria officinalis (Common soapwort)).